The primary structure comprises 317 residues: Eukaryotic translation initiation factor 2 subunit 2 (317 aa).

The tract at residues 1–146 is disordered; the sequence is MSATEEENVL…KEKTITTSDG (146 aa). The span at 79–90 shows a compositional bias: basic and acidic residues; sequence AIEKLENEGAHD. A compositionally biased stretch (low complexity) spans 109-125; it reads KSSTTTTTSTTTTTTEP. The C4-type zinc-finger motif lies at 222 to 246; the sequence is HVYNYVFAELGTNGSIDGNQRLVIR.

Belongs to the eIF-2-beta/eIF-5 family. Eukaryotic translation initiation factor 2 eIF2 is a heterotrimeric complex composed of an alpha, a beta and a gamma subunit.

The protein resides in the cytoplasm. It is found in the cytosol. Its function is as follows. Component of the eIF2 complex that functions in the early steps of protein synthesis by forming a ternary complex with GTP and initiator tRNA. This complex binds to a 40S ribosomal subunit, followed by mRNA binding to form a 43S pre-initiation complex (43S PIC). Junction of the 60S ribosomal subunit to form the 80S initiation complex is preceded by hydrolysis of the GTP bound to eIF2 and release of an eIF2-GDP binary complex. In order for eIF2 to recycle and catalyze another round of initiation, the GDP bound to eIF2 must exchange with GTP by way of a reaction catalyzed by eIF2B. The sequence is that of Eukaryotic translation initiation factor 2 subunit 2 (eif2s2) from Dictyostelium discoideum (Social amoeba).